The primary structure comprises 396 residues: L-lactate dehydrogenase (396 aa).

Positions 1 to 380 constitute an FMN hydroxy acid dehydrogenase domain; sequence MIISAASDYR…SGDSLVQELG (380 aa). Tyr24 contacts substrate. The FMN site is built by Ser106 and Gln127. Residue Tyr129 participates in substrate binding. Thr155 is a binding site for FMN. Arg164 is a binding site for substrate. Lys251 contacts FMN. Residue His275 is the Proton acceptor of the active site. Arg278 is a substrate binding site. 306–330 serves as a coordination point for FMN; sequence DSGIRNGLDVVRMIALGADTVLLGR.

The protein belongs to the FMN-dependent alpha-hydroxy acid dehydrogenase family. FMN serves as cofactor.

It is found in the cell inner membrane. It carries out the reaction (S)-lactate + A = pyruvate + AH2. In terms of biological role, catalyzes the conversion of L-lactate to pyruvate. Is coupled to the respiratory chain. This is L-lactate dehydrogenase from Salmonella newport (strain SL254).